Reading from the N-terminus, the 569-residue chain is MPYRISRQAYAETYGPTTGDRIRLADTELILEVEKDFTTYGDEVKFGGGKVIRDGMGQSQTSRAGGAVDTVITNALILDWWGIVKADIGLKDGRIVGIGKAGNPDIQEGVTIVIGPGTEAIAGEGHILTAGGIDTHIHFICPQQIETALASGVTTLMGGGTGPATGTNATTCTPGAFHIGRMLQAAEGLPVNLGFFGKGNASTPEALEEQVRAGACGLKLHEDWGTTPAAIDACLSVADQMDVQVCIHTDTLNEAGFVEDTIAAIKGRTIHTFHTEGAGGGHAPDIIKICGEANVLPSSTNPTRPYTRNTLEEHLDMLMVCHHLDPKIPEDVAFAESRIRRETIAAEDILHDLGAFSIIASDSQAMGRVGEVITRTFQTAHKMKVQRGALPEDSSRNDNHRLKRYIAKVTINPAIAHGISSQVGSVETGKLADLVLWKPGFFGIRPQLVVKGGSIVWAQMGDANASIPTPGPVHGRPMFAAFGKALAPSCLTFMSDAAMNDNIQSKLGLKRTCIAVENTREVGKSALKLNSALPNMSVDPQTYEVFADGELLTCEPAEVLPLAQRYLLL.

One can recognise a Urease domain in the interval 131–569; that stretch reads GGIDTHIHFI…LPLAQRYLLL (439 aa). Residues histidine 136, histidine 138, and lysine 219 each coordinate Ni(2+). At lysine 219 the chain carries N6-carboxylysine. Position 221 (histidine 221) interacts with substrate. 2 residues coordinate Ni(2+): histidine 248 and histidine 274. Histidine 322 (proton donor) is an active-site residue. Aspartate 362 lines the Ni(2+) pocket.

Belongs to the metallo-dependent hydrolases superfamily. Urease alpha subunit family. In terms of assembly, heterotrimer of UreA (gamma), UreB (beta) and UreC (alpha) subunits. Three heterotrimers associate to form the active enzyme. The cofactor is Ni cation. Carboxylation allows a single lysine to coordinate two nickel ions.

Its subcellular location is the cytoplasm. The enzyme catalyses urea + 2 H2O + H(+) = hydrogencarbonate + 2 NH4(+). It functions in the pathway nitrogen metabolism; urea degradation; CO(2) and NH(3) from urea (urease route): step 1/1. In Synechococcus sp. (strain CC9311), this protein is Urease subunit alpha.